A 393-amino-acid polypeptide reads, in one-letter code: S-adenosylmethionine synthase 2 (393 aa).

Glu9 serves as a coordination point for Mg(2+). His15 contributes to the ATP binding site. Residue Glu43 participates in K(+) binding. Positions 56 and 99 each coordinate L-methionine. ATP is bound by residues 167–169 (DGK), 235–238 (SGRF), Asp246, 252–253 (RK), Ala269, Lys273, and Lys277. Asp246 provides a ligand contact to L-methionine. An L-methionine-binding site is contributed by Lys277.

The protein belongs to the AdoMet synthase family. As to quaternary structure, homotetramer. It depends on Mn(2+) as a cofactor. Requires Mg(2+) as cofactor. The cofactor is Co(2+). K(+) is required as a cofactor. NH4(+) serves as cofactor. Mostly expressed in roots, and, to a lower extent, in hypocotyls and cotyledons.

It is found in the cytoplasm. It carries out the reaction L-methionine + ATP + H2O = S-adenosyl-L-methionine + phosphate + diphosphate. The protein operates within amino-acid biosynthesis; S-adenosyl-L-methionine biosynthesis; S-adenosyl-L-methionine from L-methionine: step 1/1. Inhibited by products of SAMS reaction (SAM, Pi, PPi), substrate analogs (cycloleucine and ethionine), and alternative nucleotides (GTP, CTP and ADP). Strongly repressed by PPPi. Its function is as follows. Catalyzes the formation of S-adenosylmethionine from methionine and ATP. The reaction comprises two steps that are both catalyzed by the same enzyme: formation of S-adenosylmethionine (AdoMet) and triphosphate, and subsequent hydrolysis of the triphosphate. In Catharanthus roseus (Madagascar periwinkle), this protein is S-adenosylmethionine synthase 2 (SAMS2).